Consider the following 142-residue polypeptide: Universal stress protein C (142 aa).

The protein belongs to the universal stress protein A family.

Its subcellular location is the cytoplasm. Required for resistance to DNA-damaging agents. The polypeptide is Universal stress protein C (uspC) (Escherichia coli O157:H7).